The sequence spans 1254 residues: Zinc finger protein BRUTUS-like At1g18910 (1254 aa).

The interval 1 to 30 (MGVGDPLPLPPEKNRREVNKPPDIASTSSS) is disordered. Residues 454–474 (IHFLPLGLLKCVIMWFSAQLP) form a helical membrane-spanning segment. The CHY-type zinc finger occupies 1013–1082 (PHKLIFGCKH…ASCSNISCSS (70 aa)). 24 residues coordinate Zn(2+): C1020, H1022, C1033, C1034, C1040, C1043, H1044, H1050, C1062, C1065, C1075, C1080, C1089, C1092, H1103, C1104, C1107, C1110, H1122, C1123, C1126, C1129, H1137, and C1139. A CTCHY-type zinc finger spans residues 1084 to 1147 (MGKYYCKICK…VCREKCLEDN (64 aa)). Residues 1148–1190 (CPICHEYIFTSNSPVKALPCGHVMHSTCFQEYTCSHYTCPICS) form an RING-type; atypical zinc finger.

Binds zinc and iron ions.

It is found in the membrane. It localises to the nucleus. It functions in the pathway protein modification; protein ubiquitination. Its function is as follows. Probable E3 ubiquitin-protein ligase that may regulate the response to iron deficiency and thus contributes to iron homeostasis. The sequence is that of Zinc finger protein BRUTUS-like At1g18910 from Arabidopsis thaliana (Mouse-ear cress).